The chain runs to 209 residues: Large ribosomal subunit protein uL3 (209 aa).

Positions 127–147 (YSRGPMGHGSKSHRVAGARSA) are disordered.

This sequence belongs to the universal ribosomal protein uL3 family. Part of the 50S ribosomal subunit. Forms a cluster with proteins L14 and L19.

One of the primary rRNA binding proteins, it binds directly near the 3'-end of the 23S rRNA, where it nucleates assembly of the 50S subunit. The polypeptide is Large ribosomal subunit protein uL3 (Finegoldia magna (strain ATCC 29328 / DSM 20472 / WAL 2508) (Peptostreptococcus magnus)).